The chain runs to 1106 residues: Platelet-derived growth factor receptor beta (1106 aa).

The first 32 residues, methionine 1 to glycine 32, serve as a signal peptide directing secretion. Ig-like C2-type domains lie at leucine 33–valine 120, proline 129–glutamine 210, isoleucine 214–threonine 309, histidine 331–alanine 403, and proline 416–valine 524. Topologically, residues leucine 33–valine 532 are extracellular. N-linked (GlcNAc...) asparagine glycosylation is found at asparagine 45, asparagine 89, and asparagine 103. A disulfide bridge links cysteine 54 with cysteine 100. Residues cysteine 149 and cysteine 190 are joined by a disulfide bond. N-linked (GlcNAc...) asparagine glycosylation is found at asparagine 215 and asparagine 230. The cysteines at positions 235 and 291 are disulfide-linked. N-linked (GlcNAc...) asparagine glycans are attached at residues asparagine 292, asparagine 307, asparagine 354, asparagine 371, asparagine 468, and asparagine 479. Cysteines 436 and 508 form a disulfide. A helical transmembrane segment spans residues valine 533–isoleucine 553. Residues methionine 554–leucine 1106 are Cytoplasmic-facing. Tyrosine 562, tyrosine 579, and tyrosine 581 each carry phosphotyrosine; by autocatalysis. A Protein kinase domain is found at leucine 600 to leucine 962. ATP is bound by residues leucine 606–valine 614 and lysine 634. Position 686 is a phosphotyrosine; by ABL1 and ABL2 (tyrosine 686). Tyrosine 716, tyrosine 740, tyrosine 751, tyrosine 763, tyrosine 771, tyrosine 775, and tyrosine 778 each carry phosphotyrosine; by autocatalysis. Aspartate 826 serves as the catalytic Proton acceptor. A Phosphotyrosine; by autocatalysis modification is found at tyrosine 857. Phosphotyrosine; by ABL1 and ABL2 occurs at positions 934 and 970. Tyrosine 1009 and tyrosine 1021 each carry phosphotyrosine; by autocatalysis. The interval asparagine 1019–leucine 1106 is disordered. Residues serine 1043 to cysteine 1060 show a composition bias toward polar residues. Acidic residues predominate over residues proline 1066–glutamine 1088.

The protein belongs to the protein kinase superfamily. Tyr protein kinase family. CSF-1/PDGF receptor subfamily. In terms of assembly, interacts with homodimeric PDGFB and PDGFD, and with heterodimers formed by PDGFA and PDGFB. May also interact with homodimeric PDGFC. Monomer in the absence of bound ligand. Interaction with homodimeric PDGFB, heterodimers formed by PDGFA and PDGFB or homodimeric PDGFD, leads to receptor dimerization, where both PDGFRA homodimers and heterodimers with PDGFRB are observed. Interacts with SH2B2/APS. Interacts directly (tyrosine phosphorylated) with SHB. Interacts (tyrosine phosphorylated) with PIK3R1 and RASA1. Interacts (tyrosine phosphorylated) with CBL. Interacts (tyrosine phosphorylated) with SRC and SRC family kinases. Interacts (tyrosine phosphorylated) with PIK3C2B, maybe indirectly. Interacts (tyrosine phosphorylated) with SHC1, GRB7, GRB10 and NCK1. Interaction with GRB2 is mediated by SHC1. Interacts (via C-terminus) with NHERF1. Autophosphorylated on tyrosine residues upon ligand binding. Autophosphorylation occurs in trans, i.e. one subunit of the dimeric receptor phosphorylates tyrosine residues on the other subunit. Phosphorylation at Tyr-579, and to a lesser degree, at Tyr-581, is important for interaction with SRC family kinases. Phosphorylation at Tyr-740 and Tyr-751 is important for interaction with PIK3R1. Phosphorylation at Tyr-751 is important for interaction with NCK1. Phosphorylation at Tyr-771 and Tyr-857 is important for interaction with RASA1/GAP. Phosphorylation at Tyr-857 is important for efficient phosphorylation of PLCG1 and PTPN11, resulting in increased phosphorylation of AKT1, MAPK1/ERK2 and/or MAPK3/ERK1, PDCD6IP/ALIX and STAM, and in increased cell proliferation. Phosphorylation at Tyr-1009 is important for interaction with PTPN11. Phosphorylation at Tyr-1009 and Tyr-1021 is important for interaction with PLCG1. Phosphorylation at Tyr-1021 is important for interaction with CBL; PLCG1 and CBL compete for the same binding site. Dephosphorylated by PTPRJ at Tyr-751, Tyr-857, Tyr-1009 and Tyr-1021. Dephosphorylated by PTPN2 at Tyr-579 and Tyr-1021. In terms of processing, N-glycosylated. Post-translationally, ubiquitinated. After autophosphorylation, the receptor is polyubiquitinated, leading to its degradation.

The protein resides in the cell membrane. The protein localises to the cytoplasmic vesicle. It localises to the lysosome lumen. It carries out the reaction L-tyrosyl-[protein] + ATP = O-phospho-L-tyrosyl-[protein] + ADP + H(+). With respect to regulation, present in an inactive conformation in the absence of bound ligand. Binding of PDGFB and/or PDGFD leads to dimerization and activation by autophosphorylation on tyrosine residues. Inhibited by imatinib. In terms of biological role, tyrosine-protein kinase that acts as a cell-surface receptor for homodimeric PDGFB and PDGFD and for heterodimers formed by PDGFA and PDGFB, and plays an essential role in the regulation of embryonic development, cell proliferation, survival, differentiation, chemotaxis and migration. Plays an essential role in blood vessel development by promoting proliferation, migration and recruitment of pericytes and smooth muscle cells to endothelial cells. Plays a role in the migration of vascular smooth muscle cells and the formation of neointima at vascular injury sites. Required for normal development of the cardiovascular system. Required for normal recruitment of pericytes (mesangial cells) in the kidney glomerulus, and for normal formation of a branched network of capillaries in kidney glomeruli. Promotes rearrangement of the actin cytoskeleton and the formation of membrane ruffles. Binding of its cognate ligands - homodimeric PDGFB, heterodimers formed by PDGFA and PDGFB or homodimeric PDGFD -leads to the activation of several signaling cascades; the response depends on the nature of the bound ligand and is modulated by the formation of heterodimers between PDGFRA and PDGFRB. Phosphorylates PLCG1, PIK3R1, PTPN11, RASA1/GAP, CBL, SHC1 and NCK1. Activation of PLCG1 leads to the production of the cellular signaling molecules diacylglycerol and inositol 1,4,5-trisphosphate, mobilization of cytosolic Ca(2+) and the activation of protein kinase C. Phosphorylation of PIK3R1, the regulatory subunit of phosphatidylinositol 3-kinase, leads to the activation of the AKT1 signaling pathway. Phosphorylation of SHC1, or of the C-terminus of PTPN11, creates a binding site for GRB2, resulting in the activation of HRAS, RAF1 and down-stream MAP kinases, including MAPK1/ERK2 and/or MAPK3/ERK1. Promotes phosphorylation and activation of SRC family kinases. Promotes phosphorylation of PDCD6IP/ALIX and STAM. Receptor signaling is down-regulated by protein phosphatases that dephosphorylate the receptor and its down-stream effectors, and by rapid internalization of the activated receptor. The protein is Platelet-derived growth factor receptor beta (PDGFRB) of Homo sapiens (Human).